A 146-amino-acid chain; its full sequence is Anti-sigma F factor (146 aa).

The protein belongs to the anti-sigma-factor family.

The enzyme catalyses L-seryl-[protein] + ATP = O-phospho-L-seryl-[protein] + ADP + H(+). It carries out the reaction L-threonyl-[protein] + ATP = O-phospho-L-threonyl-[protein] + ADP + H(+). Binds to sigma F and blocks its ability to form an RNA polymerase holoenzyme (E-sigma F). Phosphorylates SpoIIAA on a serine residue. This phosphorylation may enable SpoIIAA to act as an anti-anti-sigma factor that counteracts SpoIIAB and thus releases sigma F from inhibition. The sequence is that of Anti-sigma F factor from Oceanobacillus iheyensis (strain DSM 14371 / CIP 107618 / JCM 11309 / KCTC 3954 / HTE831).